Consider the following 288-residue polypeptide: Homoserine kinase (288 aa).

79–89 (PPARGLGSSSA) contacts ATP.

Belongs to the GHMP kinase family. Homoserine kinase subfamily.

Its subcellular location is the cytoplasm. The catalysed reaction is L-homoserine + ATP = O-phospho-L-homoserine + ADP + H(+). Its pathway is amino-acid biosynthesis; L-threonine biosynthesis; L-threonine from L-aspartate: step 4/5. In terms of biological role, catalyzes the ATP-dependent phosphorylation of L-homoserine to L-homoserine phosphate. The polypeptide is Homoserine kinase (Listeria innocua serovar 6a (strain ATCC BAA-680 / CLIP 11262)).